The following is a 291-amino-acid chain: Foldase protein PrsA 2 (291 aa).

Positions Met-1–Ala-20 are cleaved as a signal peptide. Residue Cys-21 is the site of N-palmitoyl cysteine attachment. A lipid anchor (S-diacylglycerol cysteine) is attached at Cys-21. Residues Gln-135–Lys-226 enclose the PpiC domain.

This sequence belongs to the PrsA family.

It localises to the cell membrane. The catalysed reaction is [protein]-peptidylproline (omega=180) = [protein]-peptidylproline (omega=0). Plays a major role in protein secretion by helping the post-translocational extracellular folding of several secreted proteins. The sequence is that of Foldase protein PrsA 2 (prsA2) from Listeria innocua serovar 6a (strain ATCC BAA-680 / CLIP 11262).